A 784-amino-acid chain; its full sequence is LPS-assembly protein LptD (784 aa).

The first 24 residues, 1 to 24 (MKKRIPTLLATMIATALYSQQGLA), serve as a signal peptide directing secretion. Cystine bridges form between C31-C724 and C173-C725.

Belongs to the LptD family. Component of the lipopolysaccharide transport and assembly complex. Interacts with LptE and LptA. Post-translationally, contains two intramolecular disulfide bonds.

It localises to the cell outer membrane. Functionally, together with LptE, is involved in the assembly of lipopolysaccharide (LPS) at the surface of the outer membrane. The polypeptide is LPS-assembly protein LptD (Escherichia coli O157:H7).